The chain runs to 146 residues: uncharacterized protein (146 aa).

Residues 87–121 are disordered; the sequence is SRSHHSTAKSAKSALSSDSGDGSDPDPEPETFPSA. Residues 94 to 106 are compositionally biased toward low complexity; it reads AKSAKSALSSDSG.

This is an uncharacterized protein from Escherichia coli (strain K12).